Reading from the N-terminus, the 123-residue chain is Small ribosomal subunit protein uS12 (123 aa).

Aspartate 89 is subject to 3-methylthioaspartic acid.

This sequence belongs to the universal ribosomal protein uS12 family. Part of the 30S ribosomal subunit. Contacts proteins S8 and S17. May interact with IF1 in the 30S initiation complex.

Its function is as follows. With S4 and S5 plays an important role in translational accuracy. In terms of biological role, interacts with and stabilizes bases of the 16S rRNA that are involved in tRNA selection in the A site and with the mRNA backbone. Located at the interface of the 30S and 50S subunits, it traverses the body of the 30S subunit contacting proteins on the other side and probably holding the rRNA structure together. The combined cluster of proteins S8, S12 and S17 appears to hold together the shoulder and platform of the 30S subunit. The chain is Small ribosomal subunit protein uS12 from Rhizobium etli (strain ATCC 51251 / DSM 11541 / JCM 21823 / NBRC 15573 / CFN 42).